A 302-amino-acid polypeptide reads, in one-letter code: MKIVILSRNKSLYSTRRLKEEGEARGHQIDIIDTLHCYMDITSSRPTVRYQGEELPVYDALIPRIGASVTFYGTAVARQFEVMGTFNINESVAISRSRDKLRSMQLLSRKGIGMPRTGFASKPDNIKDLIKNVGGAPVVIKLLEGTQGIGVVLAETAKTAESIIEAFMGIKANILVQEFIKEAGGADIRCLVIGGKVVAAMKRQGAEGEFRSNLHRGGSAVVVKLTKIERETAVNAAKIMGLNFCGVDLLRSESGPKVMEVNSSPGLEGIETATGKNIAGMVFEFLEKNMKAEHSNKTRGRG.

The region spanning 104-287 is the ATP-grasp domain; sequence MQLLSRKGIG…IAGMVFEFLE (184 aa). Residues lysine 141, 178 to 179, aspartate 187, and 211 to 213 contribute to the ATP site; these read EF and RSN. Mg(2+) is bound by residues aspartate 248, glutamate 260, and asparagine 262. Mn(2+)-binding residues include aspartate 248, glutamate 260, and asparagine 262.

Belongs to the RimK family. Mg(2+) serves as cofactor. Requires Mn(2+) as cofactor.

The protein is Probable alpha-L-glutamate ligase of Psychromonas ingrahamii (strain DSM 17664 / CCUG 51855 / 37).